The sequence spans 179 residues: Large ribosomal subunit protein uL5 (179 aa).

The protein belongs to the universal ribosomal protein uL5 family. As to quaternary structure, part of the 50S ribosomal subunit; part of the 5S rRNA/L5/L18/L25 subcomplex. Contacts the 5S rRNA and the P site tRNA. Forms a bridge to the 30S subunit in the 70S ribosome.

Functionally, this is one of the proteins that bind and probably mediate the attachment of the 5S RNA into the large ribosomal subunit, where it forms part of the central protuberance. In the 70S ribosome it contacts protein S13 of the 30S subunit (bridge B1b), connecting the 2 subunits; this bridge is implicated in subunit movement. Contacts the P site tRNA; the 5S rRNA and some of its associated proteins might help stabilize positioning of ribosome-bound tRNAs. This chain is Large ribosomal subunit protein uL5, found in Exiguobacterium sibiricum (strain DSM 17290 / CCUG 55495 / CIP 109462 / JCM 13490 / 255-15).